A 157-amino-acid polypeptide reads, in one-letter code: Transcription elongation factor GreA (157 aa).

Residues 12-74 (LKKLEEELEY…TLEAMLKNAK (63 aa)) are a coiled coil.

Belongs to the GreA/GreB family.

Functionally, necessary for efficient RNA polymerase transcription elongation past template-encoded arresting sites. The arresting sites in DNA have the property of trapping a certain fraction of elongating RNA polymerases that pass through, resulting in locked ternary complexes. Cleavage of the nascent transcript by cleavage factors such as GreA or GreB allows the resumption of elongation from the new 3'terminus. GreA releases sequences of 2 to 3 nucleotides. This is Transcription elongation factor GreA from Caldanaerobacter subterraneus subsp. tengcongensis (strain DSM 15242 / JCM 11007 / NBRC 100824 / MB4) (Thermoanaerobacter tengcongensis).